The following is a 177-amino-acid chain: Large ribosomal subunit protein uL6 (177 aa).

The protein belongs to the universal ribosomal protein uL6 family. Part of the 50S ribosomal subunit.

In terms of biological role, this protein binds to the 23S rRNA, and is important in its secondary structure. It is located near the subunit interface in the base of the L7/L12 stalk, and near the tRNA binding site of the peptidyltransferase center. The protein is Large ribosomal subunit protein uL6 of Cupriavidus necator (strain ATCC 17699 / DSM 428 / KCTC 22496 / NCIMB 10442 / H16 / Stanier 337) (Ralstonia eutropha).